We begin with the raw amino-acid sequence, 308 residues long: Olfactory receptor 2D2 (308 aa).

At 1 to 25 (MRQINQTQVTEFLLLGLSDGPHTEQ) the chain is on the extracellular side. N5 carries N-linked (GlcNAc...) asparagine glycosylation. Residues 26 to 49 (LLFIVLLGVYLVTVLGNLLLISLV) traverse the membrane as a helical segment. At 50-57 (HVDSQLHT) the chain is on the cytoplasmic side. The helical transmembrane segment at 58–79 (PMYFFLCNLSLADLCFSTNIVP) threads the bilayer. The Extracellular segment spans residues 80-100 (QALVHLLSRKKVIAFTLCAAR). A helical transmembrane segment spans residues 101-120 (LLFFLIFGCTQCALLAVMSY). Residues 121–139 (DRYVAICNPLRYPNIMTWK) lie on the Cytoplasmic side of the membrane. The chain crosses the membrane as a helical span at residues 140 to 158 (VCVQLATGSWTSGILVSVV). Residues 159–195 (DTTFILRLPYRGSNSIAHFFCEAPALLILASTDTHAS) are Extracellular-facing. The chain crosses the membrane as a helical span at residues 196–219 (EMAIFLMGVVILLIPVFLILVSYG). Residues 220–236 (RIIVTVVKMKSTVGSLK) lie on the Cytoplasmic side of the membrane. A helical transmembrane segment spans residues 237 to 259 (AFSTCGSHLMVVILFYGSAIITY). Residues 260-270 (MTPKSSKQQEK) are Extracellular-facing. The helical transmembrane segment at 271 to 290 (SVSVFYAIVTPMLNPLIYSL) threads the bilayer. At 291–308 (RNKDVKAALRKVATRNFP) the chain is on the cytoplasmic side.

Belongs to the G-protein coupled receptor 1 family.

The protein localises to the cell membrane. In terms of biological role, odorant receptor. The sequence is that of Olfactory receptor 2D2 (OR2D2) from Homo sapiens (Human).